The primary structure comprises 90 residues: Neurotoxin LmNaTx19 (90 aa).

The signal sequence occupies residues 1 to 19 (MNHLILIVAMCLMVIGVQC). The LCN-type CS-alpha/beta domain occupies 21 to 80 (KDGYLYDDVDCKFSCWDNEYCRKLCKSKKAVGGYCWRWRFSCYCTGLPDNEKTEGTYKCG). Disulfide bonds link Cys31/Cys79, Cys35/Cys55, Cys41/Cys62, and Cys45/Cys64.

Belongs to the long (4 C-C) scorpion toxin superfamily. Sodium channel inhibitor family. Alpha subfamily. Expressed by the venom gland.

It is found in the secreted. Functionally, binds voltage-independently at site-3 of voltage-gated sodium channels (Nav) and inhibits the inactivation of the activated channels, thereby blocking neuronal transmission. The sequence is that of Neurotoxin LmNaTx19 from Lychas mucronatus (Chinese swimming scorpion).